The primary structure comprises 316 residues: Protein lifeguard 2 (316 aa).

The segment at 1–46 (MTQGKLSVANKAPGTEGQQQANGEKKETPAVPSAPPSYEEATSGEG) is disordered. The next 3 membrane-spanning stretches (helical) occupy residues 106–126 (VYTI…LFTF), 138–158 (PGWY…LACC), and 165–185 (FPWN…LTGM). N-linked (GlcNAc...) asparagine glycosylation is present at Asn-191. 4 consecutive transmembrane segments (helical) span residues 194 to 214 (SVLL…VFSF), 225 to 245 (GVLF…AILL), 251 to 271 (PWLH…FLAF), and 290 to 310 (IFGA…FLQL).

This sequence belongs to the BI1 family. LFG subfamily. As to quaternary structure, interacts with FAS/TNFRSF6 and BAX.

It is found in the cell membrane. Its subcellular location is the membrane raft. The protein resides in the postsynaptic cell membrane. Functionally, antiapoptotic protein which protects cells uniquely from Fas-induced apoptosis. Regulates Fas-mediated apoptosis in neurons by interfering with caspase-8 activation. Plays a role in cerebellar development by affecting cerebellar size, internal granular layer (IGL) thickness, and Purkinje cell (PC) development. The polypeptide is Protein lifeguard 2 (FAIM2) (Bos taurus (Bovine)).